The chain runs to 195 residues: MASRFIKCVTVGDGAVGKTCMLISYTSNTFPTDYVPTVFDNFSANVVVDGNTVNLGLWDTAGQEDYNRLRPLSYRGADVFILAFSLISKASYENIAKKWIPELRHYAPGVPIILVGTKLDLRDDKQFFIDHPGAVPITTNQGEELKKLIGSAVYIECSSKTQQNVKAVFDAAIKVVLQPPKQKKKKKNKNRCAFL.

Residues 12–19 (GDGAVGKT), 30–37 (FPTDYVPT), 59–63 (DTAGQ), and 117–120 (TKLD) each bind GTP. The Effector region motif lies at 34–42 (YVPTVFDNF). At Cys192 the chain carries Cysteine methyl ester. The S-geranylgeranyl cysteine moiety is linked to residue Cys192. The propeptide at 193-195 (AFL) is removed in mature form.

This sequence belongs to the small GTPase superfamily. Rho family. Interacts with SPK1, ICR1, ICR5 and PIR. In terms of tissue distribution, ubiquitous.

The protein localises to the cytoplasm. It localises to the cell membrane. Functionally, inactive GDP-bound Rho GTPases reside in the cytosol, are found in a complex with Rho GDP-dissociation inhibitors (Rho GDIs), and are released from the GDI protein in order to translocate to membranes upon activation. Involved in cell polarity control during the actin-dependent tip growth of root hairs, thus regulating root hair length and root hair initiation. Contributes, in a SPK1-dependent manner, to the prevention of cortical microtubules organization into parallel arrays oriented perpendicular to the axis of cell elongation to limit anisotropic cell growth during petal development. May regulate a WAVE complex that activates the Arp2/3 complex. The sequence is that of Rac-like GTP-binding protein ARAC4 from Arabidopsis thaliana (Mouse-ear cress).